Here is a 92-residue protein sequence, read N- to C-terminus: Small ribosomal subunit protein uS19 (92 aa).

Belongs to the universal ribosomal protein uS19 family.

In terms of biological role, protein S19 forms a complex with S13 that binds strongly to the 16S ribosomal RNA. This chain is Small ribosomal subunit protein uS19, found in Magnetococcus marinus (strain ATCC BAA-1437 / JCM 17883 / MC-1).